We begin with the raw amino-acid sequence, 370 residues long: Aldo-keto reductase dtxS3 (370 aa).

D78 contributes to the NADP(+) binding site. Residue Y83 is the Proton donor of the active site. Residue H174 coordinates substrate. Residues 204 to 205, Q230, 259 to 269, and 333 to 341 contribute to the NADP(+) site; these read SS, GPLASGRLARR, and GSVGRIEEA.

Belongs to the aldo/keto reductase family.

It functions in the pathway secondary metabolite biosynthesis. Aldo-keto reductase; part of the gene cluster that mediates the biosynthesis of destruxins, insecticidal cyclic hexadepsipeptides which induce flaccid paralysis and visceral muscle contraction in insects through targeting the calcium channels and vacuolar-type ATPases. The aldo-keto reductase dtxS3 converts alpha-ketoisocaproic acid from deaminated leucine into alpha-hydroxyisocaproic acid (HIC), which is the first substrate for destruxin assembly by dtxS1. L-aspartate decarboxylase dtxS4 converts aspartic acid into beta-alanine, the last substrate for the destruxin assembly line performed by dtxS1. The nonribosomal peptide synthetase dtxS1 synthesizes destruxins B and B2, whereas the cytochrome P450 monooxygenase dtxS2 is required to convert destruxin B into other destruxin derivatives, including destructins C, D, A and E. Destruxin E-diol (ED) is further produced in a non-enzymatic manner from destruxin E. Destruxins play an important role in virulence and escape from insect host immune defenses. This chain is Aldo-keto reductase dtxS3, found in Metarhizium robertsii (strain ARSEF 23 / ATCC MYA-3075) (Metarhizium anisopliae (strain ARSEF 23)).